Here is a 416-residue protein sequence, read N- to C-terminus: 5-hydroxytryptamine receptor 1A-beta (416 aa).

Residues 1 to 35 are Extracellular-facing; that stretch reads MEGTNNTTGWTHFDSTSNRTSKSFDEEVKLSYQVV. Residues Asn-5, Asn-6, and Asn-18 are each glycosylated (N-linked (GlcNAc...) asparagine). A helical membrane pass occupies residues 36-56; that stretch reads TSFLLGALILCSIFGNACVVA. The Cytoplasmic portion of the chain corresponds to 57 to 70; it reads AIALERSLQNVANY. Residues 71–95 form a helical membrane-spanning segment; that stretch reads LIGSLAVTDLMVSVLVLPMAALYQV. The Extracellular portion of the chain corresponds to 96–104; sequence LNRWTLGQI. Residues 105 to 129 traverse the membrane as a helical segment; that stretch reads PCDIFISLDMLCCTSSILHLCVIAL. The cysteines at positions 106 and 189 are disulfide-linked. Positions 113 and 117 each coordinate serotonin. Residues 130 to 132 carry the DRY motif; important for ligand-induced conformation changes motif; that stretch reads DRY. At 130 to 149 the chain is on the cytoplasmic side; that stretch reads DRYWAITEPIDYMKKRTPRR. A helical membrane pass occupies residues 150–171; it reads AAVLISVTWLVGFSISIPPMLI. Over 172–195 the chain is Extracellular; it reads MRSQPSSMAEDRANSKQCKITQDP. A helical transmembrane segment spans residues 196 to 218; sequence WYTIYSTFGAFYIPLTLMLVLYG. The Cytoplasmic segment spans residues 219-340; sequence RIFKAARFRI…LARERKTVKT (122 aa). 1D-myo-inositol 4-phosphate contacts are provided by Lys-339, Thr-340, and Gly-346. Residues 341–364 traverse the membrane as a helical segment; it reads LGIIMGTFILCWLPFFIVALVMPF. The Extracellular portion of the chain corresponds to 365 to 372; that stretch reads CQESCFMP. A helical membrane pass occupies residues 373–397; that stretch reads HWLKDVINWLGYSNSLLNPIIYAYF. The NPxxY motif; important for ligand-induced conformation changes and signaling motif lies at 390–394; it reads NPIIY. Positions 397, 398, and 399 each coordinate 1D-myo-inositol 4-phosphate. The Cytoplasmic portion of the chain corresponds to 398-416; that stretch reads NKDFQSAFKKIIKCHFCRA.

The protein belongs to the G-protein coupled receptor 1 family. 5-hydroxytryptamine receptor subfamily.

The protein localises to the cell membrane. With respect to regulation, G-protein coupled receptor activity is regulated by lipids: phosphatidylinositol 4-phosphate increases HTR1A-mediated activity. Functionally, G-protein coupled receptor for 5-hydroxytryptamine (serotonin). Also functions as a receptor for various drugs and psychoactive substances. Ligand binding causes a conformation change that triggers signaling via guanine nucleotide-binding proteins (G proteins) and modulates the activity of downstream effectors, such as adenylate cyclase. HTR1A is coupled to G(i)/G(o) G alpha proteins and mediates inhibitory neurotransmission: signaling inhibits adenylate cyclase activity and activates a phosphatidylinositol-calcium second messenger system that regulates the release of Ca(2+) ions from intracellular stores. Beta-arrestin family members regulate signaling by mediating both receptor desensitization and resensitization processes. The polypeptide is 5-hydroxytryptamine receptor 1A-beta (htr1a-B) (Takifugu rubripes (Japanese pufferfish)).